The primary structure comprises 172 residues: 3-hydroxydecanoyl-[acyl-carrier-protein] dehydratase (172 aa).

Residue His-71 is part of the active site.

This sequence belongs to the thioester dehydratase family. FabA subfamily. Homodimer.

The protein resides in the cytoplasm. The catalysed reaction is a (3R)-hydroxyacyl-[ACP] = a (2E)-enoyl-[ACP] + H2O. The enzyme catalyses (3R)-hydroxydecanoyl-[ACP] = (2E)-decenoyl-[ACP] + H2O. It carries out the reaction (2E)-decenoyl-[ACP] = (3Z)-decenoyl-[ACP]. It functions in the pathway lipid metabolism; fatty acid biosynthesis. Functionally, necessary for the introduction of cis unsaturation into fatty acids. Catalyzes the dehydration of (3R)-3-hydroxydecanoyl-ACP to E-(2)-decenoyl-ACP and then its isomerization to Z-(3)-decenoyl-ACP. Can catalyze the dehydratase reaction for beta-hydroxyacyl-ACPs with saturated chain lengths up to 16:0, being most active on intermediate chain length. The polypeptide is 3-hydroxydecanoyl-[acyl-carrier-protein] dehydratase (Vibrio parahaemolyticus serotype O3:K6 (strain RIMD 2210633)).